The primary structure comprises 130 residues: MARVKRAVNAQKKRRTLLATASGYRGQRSRLYRKAKEQVLHSMQYSYRDRRDRKGDFRQLWIQRINAGARANGLTYNRLIQGLKLAGIEVDRKILADLAVNDAAAFAAIVEKARAAVAEEGTGGAAAQAA.

This sequence belongs to the bacterial ribosomal protein bL20 family.

In terms of biological role, binds directly to 23S ribosomal RNA and is necessary for the in vitro assembly process of the 50S ribosomal subunit. It is not involved in the protein synthesizing functions of that subunit. This Salinispora tropica (strain ATCC BAA-916 / DSM 44818 / JCM 13857 / NBRC 105044 / CNB-440) protein is Large ribosomal subunit protein bL20.